A 95-amino-acid polypeptide reads, in one-letter code: Small ribosomal subunit protein bS6 (95 aa).

Belongs to the bacterial ribosomal protein bS6 family.

Functionally, binds together with bS18 to 16S ribosomal RNA. The polypeptide is Small ribosomal subunit protein bS6 (Shouchella clausii (strain KSM-K16) (Alkalihalobacillus clausii)).